We begin with the raw amino-acid sequence, 596 residues long: Lamin-B2 (596 aa).

Residues 1–20 (MASLPPHAGPATPLSPTRLS) are disordered. A head region spans residues 1 to 26 (MASLPPHAGPATPLSPTRLSRLQEKE). The residue at position 12 (threonine 12) is a Phosphothreonine. Phosphoserine is present on serine 15. The IF rod domain maps to 24–380 (EKEELRELND…KLLEGEEERL (357 aa)). Residues 27–61 (ELRELNDRLAHYIDRVRALELENDRLLLRISEKEE) form a coil 1A region. Residue lysine 59 is modified to N6-acetyllysine; alternate. A Glycyl lysine isopeptide (Lys-Gly) (interchain with G-Cter in SUMO2); alternate cross-link involves residue lysine 59. Positions 62–73 (VTTREVSGIKTL) are linker 1. The segment at 74-207 (YESELADARR…AFSKSVFEEE (134 aa)) is coil 1B. Residues lysine 173 and lysine 233 each participate in a glycyl lysine isopeptide (Lys-Gly) (interchain with G-Cter in SUMO2) cross-link. The segment at 208–234 (VRETRRRHERRLVEVDSSRQQEYDFKM) is linker 2. Residues 235–378 (AQALEDLRSQ…YRKLLEGEEE (144 aa)) are coil 2. 2 positions are modified to phosphoserine: serine 294 and serine 385. Positions 376 to 440 (EEERLKLSPS…ASRVSSGSRL (65 aa)) are disordered. The interval 379 to 596 (RLKLSPSPSS…RTTSRGCRLM (218 aa)) is tail. Residues 382 to 403 (LSPSPSSRITISRATSSSSSSS) are compositionally biased toward low complexity. Threonine 391 carries an O-linked (GlcNAc) threonine glycan. 3 positions are modified to phosphoserine: serine 398, serine 400, and serine 402. Arginine 413 carries the post-translational modification Omega-N-methylarginine. The Nuclear localization signal motif lies at 415-420 (KRRRLE). Residues 425–439 (SGSPSRASRVSSGSR) are compositionally biased toward low complexity. The 122-residue stretch at 438–559 (SRLAQQTVAT…VKAAKHSSVQ (122 aa)) folds into the LTD domain. Lysine 465 participates in a covalent cross-link: Glycyl lysine isopeptide (Lys-Gly) (interchain with G-Cter in SUMO2). Serine 473 is subject to Phosphoserine. The tract at residues 552-596 (AAKHSSVQGRENGEEEEEEEAEFGEEDLFHQQGDPRTTSRGCRLM) is disordered. Residues 564-577 (GEEEEEEEAEFGEE) show a composition bias toward acidic residues. Residues 585 to 596 (DPRTTSRGCRLM) are compositionally biased toward polar residues. Residue cysteine 593 is modified to Cysteine methyl ester. Cysteine 593 carries the S-farnesyl cysteine lipid modification. Positions 594–596 (RLM) are cleaved as a propeptide — removed in mature form.

This sequence belongs to the intermediate filament family. As to quaternary structure, dimer. Lamin dimers then assemble into dimeric head-to-tail polymers. Ultimately, two head-to-tail polymers assemble laterally into a protofilament with a uniformly shaped rod of 3.5 nm in diameter. Interacts with TMEM43. Post-translationally, B-type lamins undergo a series of modifications, such as farnesylation and phosphorylation. Increased phosphorylation of the lamins occurs before envelope disintegration and probably plays a role in regulating lamin associations. In terms of processing, phosphorylation plays a key role in lamin organization, subcellular localization and nuclear envelope disintegration. Phosphorylation by CDK1 at Ser-15 and Ser-385 at the onset of mitosis drives lamin disassembly and nuclear envelope breakdown. In terms of tissue distribution, germ cell-specific.

Its subcellular location is the nucleus lamina. Lamins are intermediate filament proteins that assemble into a filamentous meshwork, and which constitute the major components of the nuclear lamina, a fibrous layer on the nucleoplasmic side of the inner nuclear membrane. Lamins provide a framework for the nuclear envelope, bridging the nuclear envelope and chromatin, thereby playing an important role in nuclear assembly, chromatin organization, nuclear membrane and telomere dynamics. The structural integrity of the lamina is strictly controlled by the cell cycle, as seen by the disintegration and formation of the nuclear envelope in prophase and telophase, respectively. The sequence is that of Lamin-B2 (Lmnb2) from Mus musculus (Mouse).